Consider the following 572-residue polypeptide: Probable D-xylulose kinase A (572 aa).

Substrate contacts are provided by His95, Arg166, Asp282, and Asn283. ATP contacts are provided by residues Trp365, 470 to 471 (GG), and Asn474.

This sequence belongs to the FGGY kinase family.

It is found in the cytoplasm. The enzyme catalyses D-xylulose + ATP = D-xylulose 5-phosphate + ADP + H(+). Its function is as follows. Highly specific D-xylulose kinase which participates in the catabolism of xylose. Xylose is a major component of hemicelluloses such as xylan. Most fungi utilize D-xylose via three enzymatic reactions, xylose reductase (XR), xylitol dehydrogenase (XDH), and xylulokinase, to form xylulose 5-phosphate, which enters pentose phosphate pathway. The sequence is that of Probable D-xylulose kinase A (xkiA) from Aspergillus flavus (strain ATCC 200026 / FGSC A1120 / IAM 13836 / NRRL 3357 / JCM 12722 / SRRC 167).